A 371-amino-acid polypeptide reads, in one-letter code: Leucine-rich repeat-containing protein 2 (371 aa).

LRR repeat units lie at residues 122–143 (HLRE…IQLF), 145–166 (AMRI…IGCL), 168–189 (NLKE…LGDC), 191–214 (NLER…SNLK), 215–235 (QVTF…CVLR), 238–260 (NLQW…DRLE), 261–283 (ELQS…LNLK), 284–305 (KLTL…LCDS), and 308–329 (PLKF…DGNE).

The protein is Leucine-rich repeat-containing protein 2 (LRRC2) of Homo sapiens (Human).